The sequence spans 268 residues: 4-pyridoxolactonase (268 aa).

Zn(2+) contacts are provided by H96, H98, D100, H101, H185, D207, and H252. Residue D100 is the Proton donor/acceptor of the active site.

The protein belongs to the metallo-beta-lactamase superfamily. In terms of assembly, homodimer. Zn(2+) is required as a cofactor.

The catalysed reaction is 4-pyridoxolactone + H2O = 4-pyridoxate + H(+). It functions in the pathway cofactor degradation; B6 vitamer degradation; 4-pyridoxate from pyridoxal: step 2/2. Inhibited by Hg(2+). Functionally, involved in the degradation of pyridoxine or pyridoxamine (free, phosphate-unbound, forms of vitamin B6). Hydrolyzes 4-pyridoxolactone to 4-pyridoxic acid. Has lower activity toward N-hexanoyl-D,L-homoserine lactone, but is not active toward 5-pyridoxolactone and gamma-butyrolactone. The polypeptide is 4-pyridoxolactonase (Mesorhizobium japonicum (strain LMG 29417 / CECT 9101 / MAFF 303099) (Mesorhizobium loti (strain MAFF 303099))).